The sequence spans 137 residues: 6,7-dimethyl-8-ribityllumazine synthase (137 aa).

5-amino-6-(D-ribitylamino)uracil is bound by residues F11, 43–45 (SFD), and 67–69 (CVI). 72 to 73 (DT) provides a ligand contact to (2S)-2-hydroxy-3-oxobutyl phosphate. H75 serves as the catalytic Proton donor. L100 lines the 5-amino-6-(D-ribitylamino)uracil pocket. (2S)-2-hydroxy-3-oxobutyl phosphate is bound at residue R115.

This sequence belongs to the DMRL synthase family. In terms of assembly, forms an icosahedral capsid composed of 60 subunits, arranged as a dodecamer of pentamers.

It catalyses the reaction (2S)-2-hydroxy-3-oxobutyl phosphate + 5-amino-6-(D-ribitylamino)uracil = 6,7-dimethyl-8-(1-D-ribityl)lumazine + phosphate + 2 H2O + H(+). The protein operates within cofactor biosynthesis; riboflavin biosynthesis; riboflavin from 2-hydroxy-3-oxobutyl phosphate and 5-amino-6-(D-ribitylamino)uracil: step 1/2. Catalyzes the formation of 6,7-dimethyl-8-ribityllumazine by condensation of 5-amino-6-(D-ribitylamino)uracil with 3,4-dihydroxy-2-butanone 4-phosphate. This is the penultimate step in the biosynthesis of riboflavin. This chain is 6,7-dimethyl-8-ribityllumazine synthase, found in Methanococcus maripaludis (strain DSM 14266 / JCM 13030 / NBRC 101832 / S2 / LL).